The chain runs to 262 residues: Zinc import ATP-binding protein ZnuC (262 aa).

One can recognise an ABC transporter domain in the interval 5 to 220 (IELQDICVDF…PSYLAMFGHR (216 aa)). 37–44 (GPNGAGKS) lines the ATP pocket.

It belongs to the ABC transporter superfamily. Zinc importer (TC 3.A.1.15.5) family. The complex is composed of two ATP-binding proteins (ZnuC), two transmembrane proteins (ZnuB) and a solute-binding protein (ZnuA).

It is found in the cell inner membrane. It catalyses the reaction Zn(2+)(out) + ATP(in) + H2O(in) = Zn(2+)(in) + ADP(in) + phosphate(in) + H(+)(in). Its function is as follows. Part of the ABC transporter complex ZnuABC involved in zinc import. Responsible for energy coupling to the transport system. In Vibrio cholerae serotype O1 (strain ATCC 39315 / El Tor Inaba N16961), this protein is Zinc import ATP-binding protein ZnuC.